Reading from the N-terminus, the 417-residue chain is Tyrosine--tRNA ligase (417 aa).

Y35 contacts L-tyrosine. The short motif at 40 to 49 (ATAGSLTVGH) is the 'HIGH' region element. L-tyrosine is bound by residues Y165 and Q169. The 'KMSKS' region motif lies at 229–233 (KFGKS). Residue K232 participates in ATP binding. An S4 RNA-binding domain is found at 350–416 (ISLLEALVFT…GKRFNALIIF (67 aa)).

Belongs to the class-I aminoacyl-tRNA synthetase family. TyrS type 1 subfamily. Homodimer.

The protein localises to the cytoplasm. It carries out the reaction tRNA(Tyr) + L-tyrosine + ATP = L-tyrosyl-tRNA(Tyr) + AMP + diphosphate + H(+). Its function is as follows. Catalyzes the attachment of tyrosine to tRNA(Tyr) in a two-step reaction: tyrosine is first activated by ATP to form Tyr-AMP and then transferred to the acceptor end of tRNA(Tyr). This Phytoplasma mali (strain AT) protein is Tyrosine--tRNA ligase.